Consider the following 123-residue polypeptide: Small ribosomal subunit protein uS12 (123 aa).

The segment at 1–28 (MPTIQQLIRKPRQPKVKRSKSQHLEQCP) is disordered. Positions 9–21 (RKPRQPKVKRSKS) are enriched in basic residues. Residue D89 is modified to 3-methylthioaspartic acid.

This sequence belongs to the universal ribosomal protein uS12 family. In terms of assembly, part of the 30S ribosomal subunit. Contacts proteins S8 and S17. May interact with IF1 in the 30S initiation complex.

With S4 and S5 plays an important role in translational accuracy. Its function is as follows. Interacts with and stabilizes bases of the 16S rRNA that are involved in tRNA selection in the A site and with the mRNA backbone. Located at the interface of the 30S and 50S subunits, it traverses the body of the 30S subunit contacting proteins on the other side and probably holding the rRNA structure together. The combined cluster of proteins S8, S12 and S17 appears to hold together the shoulder and platform of the 30S subunit. The polypeptide is Small ribosomal subunit protein uS12 (Ruegeria pomeroyi (strain ATCC 700808 / DSM 15171 / DSS-3) (Silicibacter pomeroyi)).